A 318-amino-acid chain; its full sequence is L-lactate dehydrogenase 1 (318 aa).

NAD(+) contacts are provided by residues Val17, Asp38, Lys43, Tyr69, and Gly83–Ala84. Substrate is bound by residues Gln86, Arg92, and Asn124–Asp127. Residues Ala122 to Asn124 and Ser147 each bind NAD(+). Asp152–Arg155 contributes to the substrate binding site. Arg157 and His172 together coordinate beta-D-fructose 1,6-bisphosphate. The active-site Proton acceptor is His179. A Phosphotyrosine modification is found at Tyr224. Substrate is bound at residue Thr233.

The protein belongs to the LDH/MDH superfamily. LDH family. In terms of assembly, homotetramer.

Its subcellular location is the cytoplasm. It catalyses the reaction (S)-lactate + NAD(+) = pyruvate + NADH + H(+). Its pathway is fermentation; pyruvate fermentation to lactate; (S)-lactate from pyruvate: step 1/1. Its activity is regulated as follows. Allosterically activated by fructose 1,6-bisphosphate (FBP). Its function is as follows. Catalyzes the conversion of lactate to pyruvate. The chain is L-lactate dehydrogenase 1 from Peribacillus psychrosaccharolyticus (Bacillus psychrosaccharolyticus).